A 390-amino-acid polypeptide reads, in one-letter code: S-adenosylmethionine synthase (390 aa).

H15 is an ATP binding site. Residue D17 participates in Mg(2+) binding. A K(+)-binding site is contributed by E43. 2 residues coordinate L-methionine: E56 and Q99. Residues 99–109 (QSPDINQGVDR) are flexible loop. Residues 164-166 (DAK), 230-231 (RF), D239, 245-246 (RK), A262, and K266 each bind ATP. D239 contributes to the L-methionine binding site. K270 is an L-methionine binding site.

It belongs to the AdoMet synthase family. In terms of assembly, homotetramer; dimer of dimers. It depends on Mg(2+) as a cofactor. Requires K(+) as cofactor.

Its subcellular location is the cytoplasm. It carries out the reaction L-methionine + ATP + H2O = S-adenosyl-L-methionine + phosphate + diphosphate. It functions in the pathway amino-acid biosynthesis; S-adenosyl-L-methionine biosynthesis; S-adenosyl-L-methionine from L-methionine: step 1/1. In terms of biological role, catalyzes the formation of S-adenosylmethionine (AdoMet) from methionine and ATP. The overall synthetic reaction is composed of two sequential steps, AdoMet formation and the subsequent tripolyphosphate hydrolysis which occurs prior to release of AdoMet from the enzyme. This chain is S-adenosylmethionine synthase, found in Photorhabdus laumondii subsp. laumondii (strain DSM 15139 / CIP 105565 / TT01) (Photorhabdus luminescens subsp. laumondii).